The sequence spans 91 residues: Small ribosomal subunit protein uS19 (91 aa).

The interval 72 to 91 (GEFSPTRTYTGHGSEKGKKK) is disordered.

Belongs to the universal ribosomal protein uS19 family.

In terms of biological role, protein S19 forms a complex with S13 that binds strongly to the 16S ribosomal RNA. This chain is Small ribosomal subunit protein uS19, found in Mycoplasma mobile (strain ATCC 43663 / 163K / NCTC 11711) (Mesomycoplasma mobile).